Reading from the N-terminus, the 488-residue chain is Glutamyl-tRNA(Gln) amidotransferase subunit A (488 aa).

Active-site charge relay system residues include lysine 77 and serine 152. Residue serine 176 is the Acyl-ester intermediate of the active site.

Belongs to the amidase family. GatA subfamily. As to quaternary structure, heterotrimer of A, B and C subunits.

The enzyme catalyses L-glutamyl-tRNA(Gln) + L-glutamine + ATP + H2O = L-glutaminyl-tRNA(Gln) + L-glutamate + ADP + phosphate + H(+). Its function is as follows. Allows the formation of correctly charged Gln-tRNA(Gln) through the transamidation of misacylated Glu-tRNA(Gln) in organisms which lack glutaminyl-tRNA synthetase. The reaction takes place in the presence of glutamine and ATP through an activated gamma-phospho-Glu-tRNA(Gln). The polypeptide is Glutamyl-tRNA(Gln) amidotransferase subunit A (Streptococcus pneumoniae serotype 19F (strain G54)).